The following is a 194-amino-acid chain: MEVILLERVAKLGQMGEVVKVKDGYARNFLLPRGKALRATADNKGKFEHMKADLEARNLAAKEEATKVAEKIDGRNVVVLRQASESGQLFGSVTVRDIIASFAADGIQISRSQVLLDMAVKTIGKHQIAIAVHPEVEVAVSVTVARSVDEAERINRGEDISTKREDKDAAAEAIAAAGEFFDPDAMHEDEATEQ.

Belongs to the bacterial ribosomal protein bL9 family.

Its function is as follows. Binds to the 23S rRNA. The protein is Large ribosomal subunit protein bL9 of Rhodopseudomonas palustris (strain BisA53).